Here is a 731-residue protein sequence, read N- to C-terminus: RNA-binding protein RMD9-like, mitochondrial (731 aa).

Residues 1–10 are compositionally biased toward polar residues; that stretch reads MIRLAQQTQV. Disordered regions lie at residues 1-29, 77-133, and 590-630; these read MIRL…NSLT, GGNI…GNSI, and QNDR…FNNP. A compositionally biased stretch (low complexity) spans 83–100; the sequence is NNNNHLAQNNSNNSNNHH. Over residues 101–122 the composition is skewed to basic residues; sequence NNNRNHHHNNNRNHHQNNHNHS. At Ser132 the chain carries Phosphoserine. Polar residues predominate over residues 598–617; that stretch reads SNMNSTQISRTATPSPSLTP.

This sequence belongs to the RMD9 family. As to quaternary structure, monomer. Phosphorylated. Phosphorylation promotes binding to RNA.

The protein localises to the mitochondrion inner membrane. In terms of biological role, may be involved in the processing or stability of mitochondrial mRNAs. This is RNA-binding protein RMD9-like, mitochondrial from Saccharomyces cerevisiae (strain ATCC 204508 / S288c) (Baker's yeast).